The primary structure comprises 236 residues: DCN1-like protein 5 (236 aa).

Phosphoserine is present on residues serine 9, serine 40, and serine 47. Positions 45 to 231 (FSSKKCLAWF…LLDEFVEWHK (187 aa)) constitute a DCUN1 domain.

As to quaternary structure, part of a complex that contains DCUN1D5, CUL1 and RBX1; this interaction is bridged by CUL1. Interacts (via the DCUN1 domain) with the unneddylated cullins: interacts with CUL1, CUL2, CUL3, CUL4A, CUL4B and CUL5; these interactions promote the cullin neddylation and the identity of the cullin dictates the affinity of the interaction. Interacts (via DCUN1 domain) with UBE2M (N-terminally acetylated form) and probably with UBE2F (N-terminally acetylated form). May also interact with regulators or subunits of cullin-RING ligases such as RBX1, RNF7, ELOB and DDB1; these interactions are bridged by cullins. Interacts with CAND1; this interaction is bridged by cullins and strongly inhibits the neddylation of cullins. These CAND-cullin-DCNL complexes can only be neddylated in the presence of a substrate adapter. In terms of processing, phosphorylation at Ser-40 is independent of cullin's interaction. Phosphorylated in response to both TICAM1 and MYD88 dependent Toll-like receptor (TLR) pathway activation. Phosphorylated in response to IL1B stimulation.

It is found in the nucleus. It localises to the cytoplasm. Its subcellular location is the cytoskeleton. The protein localises to the spindle. Functionally, contributes to the neddylation of all cullins by transferring NEDD8 from N-terminally acetylated NEDD8-conjugating E2s enzyme to different cullin C-terminal domain-RBX complexes which is necessary for the activation of cullin-RING E3 ubiquitin ligases (CRLs). May play a role in DNA damage response and may participate in cell proliferation and anchorage-independent cell growth. The protein is DCN1-like protein 5 (DCUN1D5) of Bos taurus (Bovine).